The chain runs to 442 residues: Putative major teichoic acid biosynthesis protein C (442 aa).

Functionally, unknown. Might be involved in poly(glycerol phosphate) teichoic acid biosynthesis. This is Putative major teichoic acid biosynthesis protein C (tagC) from Bacillus subtilis (strain 168).